The following is a 486-amino-acid chain: E3 ubiquitin-protein ligase TRIM58 (486 aa).

The segment at 16-61 (CPVCLDFLQEPVSVDCGHSFCLRCISEFCEKSDGAQGGVYACPQCR) adopts an RING-type zinc-finger fold. The B box-type zinc-finger motif lies at 91–132 (PGARRCARHGEDLSRFCEEDEAALCWVCDAGPEHRTHRTAPL). Positions 96, 99, 118, and 124 each coordinate Zn(2+). The stretch at 193-242 (LAQEEQRQLRRLEAEERATLQRLRESKSRLVQQSKALKELADELQERCQR) forms a coiled coil. Positions 273–463 (LKTACCIPGR…TPLILPPTTI (191 aa)) constitute a B30.2/SPRY domain.

The protein belongs to the TRIM/RBCC family. In terms of tissue distribution, expressed in erythroblasts.

It carries out the reaction S-ubiquitinyl-[E2 ubiquitin-conjugating enzyme]-L-cysteine + [acceptor protein]-L-lysine = [E2 ubiquitin-conjugating enzyme]-L-cysteine + N(6)-ubiquitinyl-[acceptor protein]-L-lysine.. The protein operates within protein modification; protein ubiquitination. E3 ubiquitin ligase induced during late erythropoiesis. Directly binds and ubiquitinates the intermediate chain of the microtubule motor dynein (DYNC1LI1/DYNC1LI2), stimulating the degradation of the dynein holoprotein complex. May participate in the erythroblast enucleation process through regulation of nuclear polarization. In Homo sapiens (Human), this protein is E3 ubiquitin-protein ligase TRIM58 (TRIM58).